Reading from the N-terminus, the 111-residue chain is Large ribosomal subunit protein bL21 (111 aa).

Belongs to the bacterial ribosomal protein bL21 family. As to quaternary structure, part of the 50S ribosomal subunit. Contacts protein L20.

This protein binds to 23S rRNA in the presence of protein L20. The chain is Large ribosomal subunit protein bL21 from Thermosynechococcus vestitus (strain NIES-2133 / IAM M-273 / BP-1).